The chain runs to 428 residues: Glutamate-1-semialdehyde 2,1-aminomutase (428 aa).

N6-(pyridoxal phosphate)lysine is present on K267.

Belongs to the class-III pyridoxal-phosphate-dependent aminotransferase family. HemL subfamily. As to quaternary structure, homodimer. Pyridoxal 5'-phosphate is required as a cofactor.

It localises to the cytoplasm. It carries out the reaction (S)-4-amino-5-oxopentanoate = 5-aminolevulinate. It functions in the pathway porphyrin-containing compound metabolism; protoporphyrin-IX biosynthesis; 5-aminolevulinate from L-glutamyl-tRNA(Glu): step 2/2. The protein operates within porphyrin-containing compound metabolism; chlorophyll biosynthesis. In Prochlorococcus marinus (strain MIT 9303), this protein is Glutamate-1-semialdehyde 2,1-aminomutase.